Reading from the N-terminus, the 337-residue chain is 2-oxoglutarate receptor 1 (337 aa).

At 1–38 (MIEPLDSPASDSDFLDYPSALGNCTDEQISFKMQYLPV) the chain is on the extracellular side. Residue Asn-23 is glycosylated (N-linked (GlcNAc...) asparagine). The helical transmembrane segment at 39 to 59 (IYSIIFLVGFPGNTVAISIYI) threads the bilayer. Topologically, residues 60–69 (FKMRPWRGST) are cytoplasmic. The chain crosses the membrane as a helical span at residues 70-90 (VIMLNLALTDLLYLTSLPFLI). Residues 91–116 (HYYASGENWIFGDFMCKFIRFGFHFN) are Extracellular-facing. Cys-106 and Cys-183 are disulfide-bonded. The chain crosses the membrane as a helical span at residues 117-137 (LYSSILFLTCFSLFRYVVIIH). Over 138–151 (PMSCFSIQKTRWAV) the chain is Cytoplasmic. The helical transmembrane segment at 152–172 (VACAGVWVISLVAVMPMTFLI) threads the bilayer. At 173 to 200 (TSTTRTNRSACLDLTSSDDLTTIKWYNL) the chain is on the extracellular side. The chain crosses the membrane as a helical span at residues 201-221 (ILTATTFCLPLVIVTLCYTTI). The Cytoplasmic portion of the chain corresponds to 222–242 (ISTLTHGPRTHSCFKQKARRL). A helical membrane pass occupies residues 243-263 (TILLLLVFYICFLPFHILRVI). Topologically, residues 264–284 (RIESRLLSISCSIESHIHEAY) are extracellular. A helical membrane pass occupies residues 285–305 (IVSRPLAALNTFGNLLLYVVV). Residues 306–337 (SNNFQQAFCSIVRCKASGDLEQGKKDSCSNNP) lie on the Cytoplasmic side of the membrane.

The protein belongs to the G-protein coupled receptor 1 family. Predominantly expressed in the kidney with limited expression in the testis and the smooth muscle. Expressed in SLC26A4/pendrin-positive type B and non-A non-B intercalated cells (at protein level).

The protein resides in the cell membrane. In terms of biological role, g protein-coupled receptor for dicarboxylates and amino dicarboxylates. Receptor for itaconate produced by activated macrophages upon bacterial infection. In the respiratory epithelium, couples the binding of itaconate to the activation of GNA11 and downstream intracellular Ca(2+) release, leading to mucocilliary clearance of airborne pathogens. Receptor for leukotriene E4 (LTE4) produced by mast cells upon allergic inflammation. Binds with high affinity to LTE4 and elicits mucin release from pulmonary epithelium in response to airborne fungi allergens. Regulates mucin-producing goblet cell homeostasis. Receptor for alpha-ketoglutarate produced by proximal tubule renal cells upon metabolic alkalosis. In an intrarenal paracrine signaling pathway, binds alpha-ketoglutarate and drives transepithelial salt reabsorption and bicarbonate secretion by SLC26A4/pendrin-positive intercalated cells. This is 2-oxoglutarate receptor 1 (Oxgr1) from Mus musculus (Mouse).